A 360-amino-acid chain; its full sequence is Phosphoserine aminotransferase (360 aa).

Arg42 serves as a coordination point for L-glutamate. Pyridoxal 5'-phosphate contacts are provided by residues 76–77, Trp102, Thr153, Asp172, and Gln195; that span reads AR. Lys196 carries the post-translational modification N6-(pyridoxal phosphate)lysine. 237–238 provides a ligand contact to pyridoxal 5'-phosphate; sequence NT.

Belongs to the class-V pyridoxal-phosphate-dependent aminotransferase family. SerC subfamily. Homodimer. The cofactor is pyridoxal 5'-phosphate.

It localises to the cytoplasm. It catalyses the reaction O-phospho-L-serine + 2-oxoglutarate = 3-phosphooxypyruvate + L-glutamate. The catalysed reaction is 4-(phosphooxy)-L-threonine + 2-oxoglutarate = (R)-3-hydroxy-2-oxo-4-phosphooxybutanoate + L-glutamate. It participates in amino-acid biosynthesis; L-serine biosynthesis; L-serine from 3-phospho-D-glycerate: step 2/3. It functions in the pathway cofactor biosynthesis; pyridoxine 5'-phosphate biosynthesis; pyridoxine 5'-phosphate from D-erythrose 4-phosphate: step 3/5. Catalyzes the reversible conversion of 3-phosphohydroxypyruvate to phosphoserine and of 3-hydroxy-2-oxo-4-phosphonooxybutanoate to phosphohydroxythreonine. This chain is Phosphoserine aminotransferase, found in Aliivibrio fischeri (strain ATCC 700601 / ES114) (Vibrio fischeri).